We begin with the raw amino-acid sequence, 89 residues long: Small ribosomal subunit protein bS18 (89 aa).

The protein belongs to the bacterial ribosomal protein bS18 family. In terms of assembly, part of the 30S ribosomal subunit. Forms a tight heterodimer with protein bS6.

In terms of biological role, binds as a heterodimer with protein bS6 to the central domain of the 16S rRNA, where it helps stabilize the platform of the 30S subunit. This Treponema denticola (strain ATCC 35405 / DSM 14222 / CIP 103919 / JCM 8153 / KCTC 15104) protein is Small ribosomal subunit protein bS18.